The chain runs to 190 residues: Lipid A 1-phosphatase (190 aa).

A run of 5 helical transmembrane segments spans residues L22–P42, F60–F80, G117–M137, Y145–L162, and M164–F184.

It belongs to the lipid A LpxE 1-phosphatase family. Does not require divalent cations. is required as a cofactor.

The protein resides in the cell inner membrane. It functions in the pathway bacterial outer membrane biogenesis; LPS lipid A biosynthesis. Its function is as follows. Removes the 1-phosphate group from tetra- and probably hexaacylated lipid A species, has no requirement for the Kdo moiety of lipid A. Has no 4'-phosphatase activity. Has no activity on phospholipids (phosphatidylglycerol, phosphatidylethanolamine or cardiolipin). This enzyme has to act before EptA can attach phosphoethanolamine to the 1-position of lipid A. Absence of the 1-phosphate group renders the bacteria partially resistant to host-derived cationic antimicrobial peptides (CAMP), allowing it to camouflage itself from the host innate immune response, and plays a role in the long-term colonization of the host's stomach. This chain is Lipid A 1-phosphatase, found in Helicobacter pylori (strain ATCC 700392 / 26695) (Campylobacter pylori).